The primary structure comprises 63 residues: Protein Wfdc21 (63 aa).

The signal sequence occupies residues 1–24; it reads MKLGAFLLLVSLITLSLEVQELQA. Residues 25–63 form the WAP; atypical domain; sequence AVRPLQLLGTCAELCRGDWDCGPEEQCVSIGCSHICTTN. 3 cysteine pairs are disulfide-bonded: C35/C56, C39/C51, and C45/C60.

In terms of tissue distribution, predominantly expressed in white adipose tissue and liver.

Its subcellular location is the secreted. Functionally, may promote activation of the metalloproteinase MMP2. The chain is Protein Wfdc21 from Mus musculus (Mouse).